Reading from the N-terminus, the 203-residue chain is ATP-dependent Clp protease proteolytic subunit (203 aa).

S100 functions as the Nucleophile in the catalytic mechanism. H125 is a catalytic residue.

It belongs to the peptidase S14 family. As to quaternary structure, fourteen ClpP subunits assemble into 2 heptameric rings which stack back to back to give a disk-like structure with a central cavity, resembling the structure of eukaryotic proteasomes.

Its subcellular location is the cytoplasm. It catalyses the reaction Hydrolysis of proteins to small peptides in the presence of ATP and magnesium. alpha-casein is the usual test substrate. In the absence of ATP, only oligopeptides shorter than five residues are hydrolyzed (such as succinyl-Leu-Tyr-|-NHMec, and Leu-Tyr-Leu-|-Tyr-Trp, in which cleavage of the -Tyr-|-Leu- and -Tyr-|-Trp bonds also occurs).. Functionally, cleaves peptides in various proteins in a process that requires ATP hydrolysis. Has a chymotrypsin-like activity. Plays a major role in the degradation of misfolded proteins. In Anaeromyxobacter dehalogenans (strain 2CP-1 / ATCC BAA-258), this protein is ATP-dependent Clp protease proteolytic subunit.